The primary structure comprises 805 residues: H(+)/Cl(-) exchange transporter 7 (805 aa).

The tract at residues 1–49 (MANVSKKVSWSGRDRDDEEAAPLLRRTARPGGGTPLLNGAGPGAARQSP) is disordered. At 1–126 (MANVSKKVSW…TAFRTVEIKR (126 aa)) the chain is on the cytoplasmic side. Residues S9 and S60 each carry the phosphoserine modification. The next 2 membrane-spanning stretches (helical) occupy residues 127–159 (WVIC…YRVI) and 174–197 (FSLL…VAFI). The Selectivity filter part_1 motif lies at 203–207 (GSGIP). Chloride is bound at residue S204. Residues 206–213 (IPQIKCFL) constitute an intramembrane region (helical). 2 consecutive transmembrane segments (helical) span residues 223-241 (RLKT…VVGG) and 247-264 (EGPM…ISQG). The short motif at 245–249 (GKEGP) is the Selectivity filter part_2 element. Intramembrane regions (helical) lie at residues 288-300 (FVSA…VSAA) and 304-312 (PVGGVLFSL). 5 helical membrane-spanning segments follow: residues 322-341 (FLTW…LNFV), 375-405 (IPVF…FRIR), 410-432 (PCLQ…FVLI), 487-507 (PLTL…TYGL), and 512-535 (GVFI…LSYL). Residues 512 to 516 (GVFIP) carry the Selectivity filter part_3 motif. F514 contributes to the chloride binding site. Positions 545-559 (GKYALMGAAAQLGGI) form an intramembrane region, helical. The note=Loop between two helices intramembrane region spans 560 to 562 (VRM). Positions 563-574 (TLSLTVIMMEAT) form an intramembrane region, helical. An intramembrane region (note=Loop between two helices) is located at residues 575–578 (SNVT). Residues 579 to 597 (YGFPIMLVLMTAKIVGDVF) form a helical membrane-spanning segment. Residues 598 to 805 (IEGLYDMHIQ…GLEELSLAQT (208 aa)) are Cytoplasmic-facing. Chloride is bound at residue Y602. 2 consecutive CBS domains span residues 631-695 (MSTP…VFVE) and 741-799 (MNPS…GLEE). ATP is bound by residues 658 to 660 (HNG) and 783 to 786 (TRKD). A Phosphoserine modification is found at S801.

It belongs to the chloride channel (TC 2.A.49) family. ClC-7/CLCN7 subfamily. As to quaternary structure, chloride channel 7 are heteromers of alpha (CLCN7) and beta (OSTM1) subunits. Brain and kidney.

The protein localises to the lysosome membrane. The enzyme catalyses 2 chloride(in) + H(+)(out) = 2 chloride(out) + H(+)(in). Slowly voltage-gated channel mediating the exchange of chloride ions against protons. Functions as antiporter and contributes to the acidification of the lysosome lumen and may be involved in maintaining lysosomal pH. The CLC channel family contains both chloride channels and proton-coupled anion transporters that exchange chloride or another anion for protons. The presence of conserved gating glutamate residues is typical for family members that function as antiporters. The polypeptide is H(+)/Cl(-) exchange transporter 7 (Homo sapiens (Human)).